The chain runs to 504 residues: Zinc finger CCCH-type with G patch domain-containing protein (504 aa).

Residues 95-121 (LSEDSNEVKPNPDTDEENEEEEQDISG) form a disordered region. The segment covering 107–118 (DTDEENEEEEQD) has biased composition (acidic residues). The segment at 165–191 (KSMKPCGFYLEGKCRFMDNCRYSHGEV) adopts a C3H1-type zinc-finger fold. Positions 308-354 (TRGIGSKLLMKMGYELGKGLGKTLSGRVEPVQAVVLPKGHSLDICAE) constitute a G-patch domain.

The protein resides in the nucleus. Transcription repressor that specifically binds the 5'-GGAG[GA]A[GA]A-3' consensus sequence. Represses transcription by recruiting the chromatin multiprotein complex NuRD to target promoters. Negatively regulates expression of EGFR, a gene involved in cell proliferation, survival and migration. In Danio rerio (Zebrafish), this protein is Zinc finger CCCH-type with G patch domain-containing protein (zgpat).